The sequence spans 282 residues: Elongation factor Ts (282 aa).

The tract at residues 80–83 (TDFV) is involved in Mg(2+) ion dislocation from EF-Tu.

Belongs to the EF-Ts family.

Its subcellular location is the cytoplasm. In terms of biological role, associates with the EF-Tu.GDP complex and induces the exchange of GDP to GTP. It remains bound to the aminoacyl-tRNA.EF-Tu.GTP complex up to the GTP hydrolysis stage on the ribosome. In Chlamydia muridarum (strain MoPn / Nigg), this protein is Elongation factor Ts (tsf).